The sequence spans 462 residues: MTTTTTILETCHIPPPPAANDLSIPLSFFDIKWLHYHPVRRLLFYHHPSSKSQFLHTIVPHLKQSLSLALTHYLPVAGNLLYPSNTEKFPQLRYAAGDSVPVTIAESNSDFESLTGNHTRDADQFYDLLPPIPPIEEESDWKLINIFAVQITLFPGEGICIGFSNHHCLGDARSIVGFISAWGEINGIGGYEGFLSNHSDSLSLPIFDRSFINDPNKIDAIFWKVLRNIPLKTASFPLPTNRVRSTFLLRRSDIEKLKTATKSPASSFVAAAAFVWSCMVKSGDKSDENAPELFIIPADARGRVDPPIPENYFGNCIVSSVAQVERGKLAAEDGFAVAAEAIGGEIEGKLKNRDEILRGAENWMSDIFKCFGMSVLGVSGSPKFDLLKADFGWGKARKLEVLSIDGENHSMSLCSSSDFNGGLEVGLSLPRERMAAFEEVFRASIMAASGPARRSPALVEPL.

Residues His167 and Asp390 each act as proton acceptor in the active site.

The protein belongs to the plant acyltransferase family. In terms of tissue distribution, detected in petals and sepals, and at lower levels in bracts and red stems.

The catalysed reaction is pelargonidin 3-O-(6-O-[(E)-caffeoyl]-beta-D-glucoside) 5-O-beta-D-glucoside + malonyl-CoA = 4'''-demalonylsalvianin + CoA. The protein operates within pigment biosynthesis; anthocyanin biosynthesis. Completely inhibited by 10 mM p-coumaric acid, this inhibition is rapid, reversible and non-competitive. Completely inhibited by 0.1 mM Cu(2+), 0.1 mM Hg(2+) and 10 mM caffeic acid. Partially inhibited by 5 mM N-ethylmaleimide, 1 mM diethylpyrocarbonate and 1 mM acetyl-CoA. Functionally, catalyzes the transfer of a malonyl group from malonyl-CoA to the 6'''-hydroxyl group of the 5-glucosyl moiety of anthocyanins. Active towards bisdemalonylsalvianin (pelargonidin 3-O-(6-caffeoyl-beta-D-glucoside) 5-O-beta-D-glucoside) and shisonin, but not towards nodemalonylsalvianin, salvianin, pelargonidin 3,5-diglucoside and delphinidin 3,5-diglucoside. This Salvia splendens (Scarlet sage) protein is Malonyl-coenzyme:anthocyanin 5-O-glucoside-6'''-O-malonyltransferase.